Here is a 177-residue protein sequence, read N- to C-terminus: Large ribosomal subunit protein uL6 (177 aa).

Belongs to the universal ribosomal protein uL6 family. In terms of assembly, part of the 50S ribosomal subunit.

Its function is as follows. This protein binds to the 23S rRNA, and is important in its secondary structure. It is located near the subunit interface in the base of the L7/L12 stalk, and near the tRNA binding site of the peptidyltransferase center. The sequence is that of Large ribosomal subunit protein uL6 from Klebsiella pneumoniae (strain 342).